Consider the following 332-residue polypeptide: Phosphate acyltransferase (332 aa).

Belongs to the PlsX family. Homodimer. Probably interacts with PlsY.

The protein resides in the cytoplasm. It catalyses the reaction a fatty acyl-[ACP] + phosphate = an acyl phosphate + holo-[ACP]. The protein operates within lipid metabolism; phospholipid metabolism. Functionally, catalyzes the reversible formation of acyl-phosphate (acyl-PO(4)) from acyl-[acyl-carrier-protein] (acyl-ACP). This enzyme utilizes acyl-ACP as fatty acyl donor, but not acyl-CoA. The protein is Phosphate acyltransferase of Nitratiruptor sp. (strain SB155-2).